The chain runs to 574 residues: uncharacterized protein (574 aa).

Helical transmembrane passes span 14–34 (FFPTLWLILAPLILSPLLFFG), 54–74 (VVPLAVTSFIPMIALPFLGIV), 124–144 (WLMAGFMIITSFISLWISDTA), 205–225 (ICKCMMLLVAHASLIGGTGTI), 253–273 (SWMAFAIPPMIFYMFSSWFIV), 323–343 (LVIFVLAVLSWVSSDPKVIPG), 350–370 (KGYVTDSCSGLVAVFLLFIWP), 403–423 (FPWSIILLLGAGFAISDAVRV), 441–461 (MPFFVMQIILSIVVVVMTEFS), 485–505 (PLYFSIPTAIGPSFSFMLPMA), and 520–540 (MIDMVSCGVFLNIFCIAITAI). N-linked (GlcNAc...) asparagine glycans are attached at residues N565 and N569.

Belongs to the SLC13A/DASS transporter (TC 2.A.47) family. NADC subfamily.

Its subcellular location is the membrane. This is an uncharacterized protein from Caenorhabditis elegans.